The sequence spans 206 residues: Large ribosomal subunit protein uL4 (206 aa).

This sequence belongs to the universal ribosomal protein uL4 family. In terms of assembly, part of the 50S ribosomal subunit.

One of the primary rRNA binding proteins, this protein initially binds near the 5'-end of the 23S rRNA. It is important during the early stages of 50S assembly. It makes multiple contacts with different domains of the 23S rRNA in the assembled 50S subunit and ribosome. Its function is as follows. Forms part of the polypeptide exit tunnel. The protein is Large ribosomal subunit protein uL4 of Nitrobacter hamburgensis (strain DSM 10229 / NCIMB 13809 / X14).